A 111-amino-acid chain; its full sequence is Disintegrin acostatin-alpha (111 aa).

Positions 1-20 (MIQVLLVTLCLAVFPYQGSS) are cleaved as a signal peptide. Residues 21-46 (IILESGNVNDYEVVYPRKVTALPKGA) constitute a propeptide that is removed on maturation. The 65-residue stretch at 47–111 (IQPKNPCCDA…GDCPRKHFYA (65 aa)) folds into the Disintegrin domain. A Pyrrolidone carboxylic acid; in Disintegrin acostatin-alpha, processed form modification is found at Q48. 4 disulfides stabilise this stretch: C53-C76, C67-C73, C72-C97, and C85-C104. Residues 89–91 (RGD) carry the Cell attachment site motif. The propeptide occupies 110-111 (YA).

This sequence belongs to the disintegrin family. Dimeric disintegrin subfamily. Heterodimer with subunit beta; disulfide-linked. Expressed by the venom gland.

It is found in the secreted. In terms of biological role, inhibits fibrinogen interaction with platelets. Acts by binding to alpha-IIb/beta-3 (ITGA2B/ITGB3) on the platelet surface and inhibits ADP-induced platelet aggregation in human platelet-rich plasma. This chain is Disintegrin acostatin-alpha, found in Agkistrodon contortrix contortrix (Southern copperhead).